The chain runs to 501 residues: Pyruvate kinase (501 aa).

Arg50 contacts substrate. The K(+) site is built by Asn52, Ser54, Asp85, and Thr86. Residue Asn52–His55 participates in ATP binding. ATP contacts are provided by Arg92 and Lys178. Residue Glu243 participates in Mg(2+) binding. Residues Gly266, Asp267, and Thr299 each contribute to the substrate site. Residue Asp267 participates in Mg(2+) binding.

The protein belongs to the pyruvate kinase family. As to quaternary structure, homotetramer. It depends on Mg(2+) as a cofactor. The cofactor is K(+).

The enzyme catalyses pyruvate + ATP = phosphoenolpyruvate + ADP + H(+). It participates in carbohydrate degradation; glycolysis; pyruvate from D-glyceraldehyde 3-phosphate: step 5/5. The protein is Pyruvate kinase (PYK1) of Lachancea kluyveri (strain ATCC 58438 / CBS 3082 / BCRC 21498 / NBRC 1685 / JCM 7257 / NCYC 543 / NRRL Y-12651) (Yeast).